A 273-amino-acid polypeptide reads, in one-letter code: 3-methyl-2-oxobutanoate hydroxymethyltransferase (273 aa).

Positions 53 and 92 each coordinate Mg(2+). Residues 53–54 (DS), D92, and K122 each bind 3-methyl-2-oxobutanoate. E124 is a binding site for Mg(2+). The active-site Proton acceptor is the E191.

The protein belongs to the PanB family. Homodecamer; pentamer of dimers. The cofactor is Mg(2+).

Its subcellular location is the cytoplasm. It carries out the reaction 3-methyl-2-oxobutanoate + (6R)-5,10-methylene-5,6,7,8-tetrahydrofolate + H2O = 2-dehydropantoate + (6S)-5,6,7,8-tetrahydrofolate. It participates in cofactor biosynthesis; (R)-pantothenate biosynthesis; (R)-pantoate from 3-methyl-2-oxobutanoate: step 1/2. Catalyzes the reversible reaction in which hydroxymethyl group from 5,10-methylenetetrahydrofolate is transferred onto alpha-ketoisovalerate to form ketopantoate. This chain is 3-methyl-2-oxobutanoate hydroxymethyltransferase, found in Bacteroides thetaiotaomicron (strain ATCC 29148 / DSM 2079 / JCM 5827 / CCUG 10774 / NCTC 10582 / VPI-5482 / E50).